A 209-amino-acid polypeptide reads, in one-letter code: Glutathione S-transferase 2 (209 aa).

Residues 1 to 81 (MLDFYYLPGS…YLCDQYGDED (81 aa)) form the GST N-terminal domain. Residues Ser-10, 51-53 (RTI), and 65-67 (ESR) each bind glutathione. The region spanning 88–209 (DTIQRAIVNQ…SGAKEFLTYK (122 aa)) is the GST C-terminal domain.

This sequence belongs to the GST superfamily. Theta family. In terms of assembly, homodimer.

The enzyme catalyses RX + glutathione = an S-substituted glutathione + a halide anion + H(+). Its function is as follows. Conjugation of reduced glutathione to a wide number of exogenous and endogenous hydrophobic electrophiles. This is Glutathione S-transferase 2 (GstD2) from Anopheles gambiae (African malaria mosquito).